A 484-amino-acid polypeptide reads, in one-letter code: Falcipain-2a (484 aa).

Residues 1 to 35 lie on the Cytoplasmic side of the membrane; that stretch reads MDYNMDYAPHEVISQQGERFVDKYVDRKILKNKKS. Positions 1–243 are cleaved as a propeptide — activation peptide; the sequence is MDYNMDYAPH…PLKNSKYLLD (243 aa). The short motif at 16–25 is the Bipartite vacuolar targeting signal 1 element; sequence QGERFVDKYV. The chain crosses the membrane as a helical; Signal-anchor for type II membrane protein span at residues 36–56; it reads LLVIISLSVLSVVGFVLFYFT. Topologically, residues 57 to 484 are lumenal; that stretch reads PNSRKSDLFK…GTDAFIPLIE (428 aa). Asn67 is a glycosylation site (N-linked (GlcNAc...) asparagine). Positions 84-105 match the Bipartite vacuolar targeting signal 2 motif; the sequence is KSPNGKKFIVSKIDEALSFYDS. Positions 244–260 match the Nose motif; required for the correct folding of the mature form motif; that stretch reads QMNYEEVIKKYKGNENF. Intrachain disulfides connect Cys282/Cys323, Cys316/Cys357, Cys342/Cys362, and Cys411/Cys472. Cys285 is an active-site residue. His417 is an active-site residue. The Arm motif; binds to host hemoglobin and required for the inhibitory interaction between the propeptide and the catalytic domain motif lies at 428–437; that stretch reads EIVNPLTKKG. Residue Asn447 is part of the active site.

It belongs to the peptidase C1 family. As to quaternary structure, component of the hemozoin formation complex (HFC) composed of falcipains FP2A and/or FP2B, plasmepsins PMII, PMIII/HAP and PMIV, heme detoxifying protein HDP and falcilysin FLN. The HFC complex is involved in hemoglobin degradation and detoxification of heme in the food vacuole during the asexual blood stage. Auto-cleaved to remove the propeptide.

Its subcellular location is the vacuole. It localises to the membrane. With respect to regulation, inhibited by cysteine protease inhibitor ICP. Inhibited by heme and heme analogs. In terms of biological role, cysteine protease which cleaves native host hemoglobin and globin in the food vacuole during the asexual blood stage. The binding to host hemoglobin is pH-sensitive and only occurs at acidic pH. Cleaves ankyrin and protein 4.1, two components of host erythrocyte membrane cytoskeleton required for the stability of the erythrocyte membrane, and thus may be involved in parasite release. Preferentially cleaves substrates which have an arginine or lysine at the P1 position and a leucine or phenylalanine at the P2 position. This Plasmodium falciparum (isolate 3D7) protein is Falcipain-2a.